The sequence spans 156 residues: ATP synthase subunit b (156 aa).

A helical membrane pass occupies residues 11 to 31; it reads LIAFALFVWFCMKFVWPPIIN.

The protein belongs to the ATPase B chain family. F-type ATPases have 2 components, F(1) - the catalytic core - and F(0) - the membrane proton channel. F(1) has five subunits: alpha(3), beta(3), gamma(1), delta(1), epsilon(1). F(0) has three main subunits: a(1), b(2) and c(10-14). The alpha and beta chains form an alternating ring which encloses part of the gamma chain. F(1) is attached to F(0) by a central stalk formed by the gamma and epsilon chains, while a peripheral stalk is formed by the delta and b chains.

It localises to the cell inner membrane. Its function is as follows. F(1)F(0) ATP synthase produces ATP from ADP in the presence of a proton or sodium gradient. F-type ATPases consist of two structural domains, F(1) containing the extramembraneous catalytic core and F(0) containing the membrane proton channel, linked together by a central stalk and a peripheral stalk. During catalysis, ATP synthesis in the catalytic domain of F(1) is coupled via a rotary mechanism of the central stalk subunits to proton translocation. In terms of biological role, component of the F(0) channel, it forms part of the peripheral stalk, linking F(1) to F(0). This chain is ATP synthase subunit b, found in Haemophilus influenzae (strain 86-028NP).